The following is a 443-amino-acid chain: Histidinol dehydrogenase (443 aa).

NAD(+)-binding residues include Tyr133, Gln191, and Asn214. Ser240, Gln262, and His265 together coordinate substrate. 2 residues coordinate Zn(2+): Gln262 and His265. Catalysis depends on proton acceptor residues Glu329 and His330. Substrate-binding residues include His330, Asp363, Glu417, and His422. Asp363 lines the Zn(2+) pocket. A Zn(2+)-binding site is contributed by His422.

Belongs to the histidinol dehydrogenase family. In terms of assembly, homodimer. Requires Zn(2+) as cofactor.

The catalysed reaction is L-histidinol + 2 NAD(+) + H2O = L-histidine + 2 NADH + 3 H(+). Its pathway is amino-acid biosynthesis; L-histidine biosynthesis; L-histidine from 5-phospho-alpha-D-ribose 1-diphosphate: step 9/9. In terms of biological role, catalyzes the sequential NAD-dependent oxidations of L-histidinol to L-histidinaldehyde and then to L-histidine. This Yersinia pestis protein is Histidinol dehydrogenase.